The following is a 644-amino-acid chain: uncharacterized protein (644 aa).

Disordered stretches follow at residues 1 to 35 (MSSHDDDHTPLLISDPSVNKPFRSRTPSPEREYCS) and 48 to 106 (GNSH…SHHN). Serine 28 carries the phosphoserine modification. Residues 58-70 (NGASSSNNNVAKS) are compositionally biased toward low complexity. A compositionally biased stretch (polar residues) spans 83 to 106 (YDSTSNSNEPISFNEPDSSNSHHN). 12 helical membrane-spanning segments follow: residues 131-151 (ILPLNFINAFSWGMIEIPLLF), 190-210 (AAFGSLAAFLGLFSTAYYGTM), 218-238 (LVLFITVSFLLLGDLWLLYQS), 245-265 (YFVLFAAALKGLGGYISTVVA), 286-306 (LNFAAYHLGTALGPSLSGFIV), 314-334 (YVFYITSTFWIIYLLYVWLIL), 398-418 (VLLAAILISLTLLGAGSMGLL), 435-455 (LILSTDSFASSITLVALFPLL), 522-542 (VWNAQLGYAIALSAAVLLAVA), 546-566 (VALFTAVIIQAISNMVVPCVQ), 583-603 (AAFAVFEAVALIIRGPIYAFV), and 614-634 (NMIFFLSAVIYGCCFIIIFFM).

The protein localises to the membrane. This is an uncharacterized protein from Schizosaccharomyces pombe (strain 972 / ATCC 24843) (Fission yeast).